The chain runs to 60 residues: Cytotoxin 2 (60 aa).

Cystine bridges form between Cys-3–Cys-21, Cys-14–Cys-38, Cys-42–Cys-53, and Cys-54–Cys-59.

The protein belongs to the three-finger toxin family. Short-chain subfamily. Type IA cytotoxin sub-subfamily. Monomer in solution; Homodimer and oligomer in the presence of negatively charged lipids forming a pore with a size ranging between 20 and 30 Angstroms. In terms of tissue distribution, expressed by the venom gland.

It localises to the secreted. It is found in the target cell membrane. Its function is as follows. Shows cytolytic activity on many different cells by forming pore in lipid membranes. In vivo, increases heart rate or kills the animal by cardiac arrest. In addition, it binds to heparin with high affinity, interacts with Kv channel-interacting protein 1 (KCNIP1) in a calcium-independent manner, and binds to integrin alpha-V/beta-3 (ITGAV/ITGB3) with moderate affinity. This is Cytotoxin 2 from Naja annulifera (Banded Egyptian cobra).